A 343-amino-acid chain; its full sequence is Protein RecA (343 aa).

68-75 (GPESGGKT) is a binding site for ATP.

This sequence belongs to the RecA family.

It is found in the cytoplasm. Its function is as follows. Can catalyze the hydrolysis of ATP in the presence of single-stranded DNA, the ATP-dependent uptake of single-stranded DNA by duplex DNA, and the ATP-dependent hybridization of homologous single-stranded DNAs. It interacts with LexA causing its activation and leading to its autocatalytic cleavage. In Syntrophus aciditrophicus (strain SB), this protein is Protein RecA.